A 490-amino-acid polypeptide reads, in one-letter code: E3 ubiquitin-protein ligase Hakai (490 aa).

Positions 34–60 are disordered; it reads QANKAKPAPRTQRTINRMPAKAPPGDE. The RING-type zinc-finger motif lies at 108–148; the sequence is CDKCGLPIKIYGRMIPCKHVFCYDCAILHEKKGDKMCPGCS. The HYB domain stretch occupies residues 147–205; that stretch reads CSDPVQRIEQCTRGSLFMCSIVQGCKRTYLSQRDLQAHINHRHMRAGKPVTRASLENVH. A C2H2-type zinc finger spans residues 163-189; the sequence is FMCSIVQGCKRTYLSQRDLQAHINHRH. Ser200, Ser284, and Ser289 each carry phosphoserine. A disordered region spans residues 254-490; that stretch reads QPHEDIRAPP…DQTRYRPYYQ (237 aa). Pro residues-rich tracts occupy residues 341-358, 371-388, and 398-422; these read APPP…PHPP, APPP…PPPG, and MNHP…PPHH. The span at 426–441 shows a compositional bias: polar residues; it reads NSLPQFTEDQGTLSPP. The span at 456-477 shows a compositional bias: pro residues; it reads PRGPPPPPRLQGPPSQTPLPGP.

This sequence belongs to the Hakai family. Homodimer. Interacts with tyrosine-phosphorylated SRC substrates. Component of the WMM complex, a N6-methyltransferase complex composed of a catalytic subcomplex, named MAC, and of an associated subcomplex, named MACOM. The MAC subcomplex is composed of METTL3 and METTL14. The MACOM subcomplex is composed of WTAP, ZC3H13, CBLL1/HAKAI, VIRMA, and, in some cases of RBM15 (RBM15 or RBM15B). Also a component of a MACOM-like complex, named WTAP complex, composed of WTAP, ZC3H13, CBLL1, VIRMA, RBM15, BCLAF1 and THRAP3. In terms of processing, phosphorylated on tyrosine residues.

The protein resides in the nucleus speckle. It is found in the nucleus. The protein localises to the nucleoplasm. Its subcellular location is the cytoplasm. The catalysed reaction is S-ubiquitinyl-[E2 ubiquitin-conjugating enzyme]-L-cysteine + [acceptor protein]-L-lysine = [E2 ubiquitin-conjugating enzyme]-L-cysteine + N(6)-ubiquitinyl-[acceptor protein]-L-lysine.. Its pathway is protein modification; protein ubiquitination. Functionally, E3 ubiquitin-protein ligase that mediates ubiquitination of several tyrosine-phosphorylated Src substrates, including CDH1, CTTN and DOK1. Targets CDH1 for endocytosis and degradation. Associated component of the WMM complex, a complex that mediates N6-methyladenosine (m6A) methylation of RNAs, a modification that plays a role in the efficiency of mRNA splicing and RNA processing. Its function in the WMM complex is unknown. This chain is E3 ubiquitin-protein ligase Hakai, found in Macaca fascicularis (Crab-eating macaque).